Here is a 158-residue protein sequence, read N- to C-terminus: 2S seed storage albumin protein (158 aa).

A signal peptide spans 1 to 21 (MTKFTILLISLLFCIAHTCSA). The Cell attachment site motif lies at 54 to 56 (RGD). Positions 65 to 81 (NHILRTMRGRINYIRRN) are excised as a propeptide.

Belongs to the 2S seed storage albumins family. The protein consists of two chains linked by 2 disulfide bonds. As to expression, expressed in cotyledons. Maximal expression in parenchyma cells undergoing DNA endoreduplication and cell expansion but not in actively dividing cells of the cotyledon.

Its function is as follows. This is a 2S seed storage protein. In terms of biological role, binds to mammalian chromatin, preventing the normal formation of the kinetochore complex in the centromere and leading to the disruption of mitosis. The chain is 2S seed storage albumin protein from Glycine max (Soybean).